Here is a 90-residue protein sequence, read N- to C-terminus: MEASSRVTVQVLLLALVVQVTLSQHWSYGWLPGGKRSVGELEATIRMMGTGGVVSLPEEASAQTQERLRPYNVIKDDSSPFDRKKRFPNK.

A signal peptide spans 1–23 (MEASSRVTVQVLLLALVVQVTLS). Residue Gln24 is modified to Pyrrolidone carboxylic acid. Gly33 is modified (glycine amide).

This sequence belongs to the GnRH family.

The protein localises to the secreted. In terms of biological role, stimulates the secretion of gonadotropins. The chain is Progonadoliberin-3 (gnrh3) from Sparus aurata (Gilthead sea bream).